Consider the following 581-residue polypeptide: Arginine--tRNA ligase (581 aa).

The 'HIGH' region motif lies at 131 to 141 (ANPTGPLHVGH).

The protein belongs to the class-I aminoacyl-tRNA synthetase family. In terms of assembly, monomer.

It is found in the cytoplasm. It carries out the reaction tRNA(Arg) + L-arginine + ATP = L-arginyl-tRNA(Arg) + AMP + diphosphate. The sequence is that of Arginine--tRNA ligase from Nitrosospira multiformis (strain ATCC 25196 / NCIMB 11849 / C 71).